A 406-amino-acid chain; its full sequence is Elongation factor Tu-A (406 aa).

A tr-type G domain is found at 10–215 (KPHVNVGTIG…AIDEYIPTPV (206 aa)). Residues 19–26 (GHVDHGKT) are G1. Residue 19-26 (GHVDHGKT) participates in GTP binding. Thr-26 contributes to the Mg(2+) binding site. Positions 61 to 65 (GITIN) are G2. The tract at residues 82-85 (DCPG) is G3. Residues 82-86 (DCPGH) and 137-140 (NKVD) contribute to the GTP site. The segment at 137–140 (NKVD) is G4. The G5 stretch occupies residues 175–177 (SAL). Thr-395 carries the post-translational modification Phosphothreonine.

It belongs to the TRAFAC class translation factor GTPase superfamily. Classic translation factor GTPase family. EF-Tu/EF-1A subfamily. In terms of assembly, monomer. Binds to the 70S ribosome, contacts tmRNA during trans-translation. Post-translationally, phosphorylated on a threonine.

It is found in the cytoplasm. The enzyme catalyses GTP + H2O = GDP + phosphate + H(+). In terms of biological role, GTP hydrolase that promotes the GTP-dependent binding of aminoacyl-tRNA to the A-site of ribosomes during protein biosynthesis. Its function is as follows. EF-Tu-GDP binds to the acceptor arm of tmRNA by interacting with its acceptor arm, suggesting that GTP hydrolysis by EF-Tu is essential for tmRNA function. Protects glycyl-tRNA(Gly) from hydrolysis by E.coli D-aminoacyl-tRNA deacylase (dtd). This Thermus thermophilus (strain ATCC 27634 / DSM 579 / HB8) protein is Elongation factor Tu-A.